Consider the following 521-residue polypeptide: MSRFARGITIVWVVLRYGLDELVLSTFRQPWLRAVTRVITFGRKLDAPRGQRLREALESLGPIFVKFGQVLSTRRDLMPPDIADELALLQDRVPPFDPDVAIATIERAFRRPIGEVFVSFDRQPVASASIAQVHFAVIRDRQGHAREVAVKVLRPGMLPVIDKDLALMRMMAGWVESLSADGKRLKPREVVAEFDNYLHDELDLVREAANAAQLRRNMQGLDLVLIPEVFWDFCHAEVLVMERMKGVPINQVDRLRSAGVDIPKLARDGVTIFFTQVFRDGFFHADMHPGNIQVSLAPETFGRYISLDFGIVGTLTEFDKEYLAQNFTAFFRRDYKRVAELHIESGWVPAHTRVNELEAAIRTVCEPYFDRPLKEISLGMVLLRLFQTSRRFQVEIQPQLVLLQKTLLNIEGLGRQLDPDLDLWSTAKPFLEKWMLDQLGPQRLWRELRAEAPHYAKILPDLPRLLHDFLRQRPNDNRVDLQELLATQKRTNRLLQSLIYGGLGFVLGLLVMQLFVRVRIF.

Residues 119-497 (SFDRQPVASA…QKRTNRLLQS (379 aa)) enclose the Protein kinase domain. Residues 125–133 (VASASIAQV) and K151 each bind ATP. The active-site Proton acceptor is D286. The helical transmembrane segment at 496–516 (QSLIYGGLGFVLGLLVMQLFV) threads the bilayer.

This sequence belongs to the ABC1 family. UbiB subfamily.

Its subcellular location is the cell inner membrane. Its pathway is cofactor biosynthesis; ubiquinone biosynthesis [regulation]. In terms of biological role, is probably a protein kinase regulator of UbiI activity which is involved in aerobic coenzyme Q (ubiquinone) biosynthesis. The sequence is that of Probable protein kinase UbiB from Acidovorax sp. (strain JS42).